A 602-amino-acid chain; its full sequence is Multiple epidermal growth factor-like domains protein 9 (602 aa).

The first 30 residues, 1-30, serve as a signal peptide directing secretion; it reads MNGGAERAMRSLPSLGGLALLCCAAAAAAA. At 31–514 the chain is on the extracellular side; it reads AVASAASAGN…LADVSWTQFN (484 aa). Positions 38 to 199 are disordered; sequence AGNVTGGGGA…PATEAPSSPP (162 aa). N-linked (GlcNAc...) asparagine glycosylation is present at Asn-40. 2 stretches are compositionally biased toward low complexity: residues 68–85 and 139–166; these read PRAT…PPRA and APTR…TVPA. Residues 167 to 176 show a composition bias toward pro residues; it reads PTTPRTPTPD. Asn-182 carries N-linked (GlcNAc...) asparagine glycosylation. Residues 187–199 show a composition bias toward pro residues; the sequence is PTPPATEAPSSPP. Disulfide bonds link Cys-204/Cys-217, Cys-206/Cys-224, Cys-226/Cys-235, Cys-238/Cys-251, Cys-254/Cys-266, Cys-256/Cys-272, Cys-274/Cys-283, Cys-286/Cys-298, Cys-301/Cys-310, Cys-303/Cys-317, Cys-320/Cys-329, Cys-332/Cys-346, Cys-349/Cys-360, Cys-351/Cys-371, Cys-374/Cys-383, Cys-386/Cys-397, Cys-400/Cys-415, Cys-402/Cys-422, Cys-425/Cys-434, and Cys-437/Cys-449. Laminin EGF-like domains lie at 204-253, 254-300, 301-348, 349-399, and 400-451; these read CNCS…LCQP, CDCS…GCLP, CQCN…ECLR, CPCS…ICRK, and CQCH…NCIK. N-linked (GlcNAc...) asparagine glycosylation is found at Asn-205 and Asn-218. Asn-245 carries N-linked (GlcNAc...) asparagine glycosylation. Asn-267 is a glycosylation site (N-linked (GlcNAc...) asparagine). Asn-305 carries N-linked (GlcNAc...) asparagine glycosylation. N-linked (GlcNAc...) asparagine glycosylation occurs at Asn-428. Residues Asn-468, Asn-481, and Asn-500 are each glycosylated (N-linked (GlcNAc...) asparagine). Residues 515–535 traverse the membrane as a helical segment; the sequence is IIILTVIIIVVVLLMGFVGAV. Residues 536-602 are Cytoplasmic-facing; sequence YMYREYQNRK…LTTPIHNYKA (67 aa).

It is found in the membrane. This Homo sapiens (Human) protein is Multiple epidermal growth factor-like domains protein 9 (MEGF9).